The following is a 117-amino-acid chain: CUE domain-containing protein CUE4 (117 aa).

Residues 27-74 (QVPSRTVQDAKPAPSVATNDPSPEPVPSAPEERVARLNRHGSDRKRAV) are disordered. Residue Lys-37 forms a Glycyl lysine isopeptide (Lys-Gly) (interchain with G-Cter in ubiquitin) linkage. A Phosphoserine modification is found at Ser-48. A compositionally biased stretch (basic and acidic residues) spans 56 to 74 (PEERVARLNRHGSDRKRAV). The CUE domain maps to 74–116 (VNSDMVEIVMTMAPHVPQEKVVQDLRNTGSIEHTMENIFAGKL).

In terms of processing, ubiquitinated.

The protein resides in the cytoplasm. It is found in the endoplasmic reticulum. The chain is CUE domain-containing protein CUE4 (CUE4) from Saccharomyces cerevisiae (strain ATCC 204508 / S288c) (Baker's yeast).